We begin with the raw amino-acid sequence, 245 residues long: Adapter protein MecA (245 aa).

This sequence belongs to the MecA family. In terms of assembly, homodimer.

Functionally, enables the recognition and targeting of unfolded and aggregated proteins to the ClpC protease or to other proteins involved in proteolysis. This chain is Adapter protein MecA, found in Streptococcus pneumoniae serotype 4 (strain ATCC BAA-334 / TIGR4).